We begin with the raw amino-acid sequence, 214 residues long: Ribonuclease T (214 aa).

Residues 20-195 (VVVDVETAGF…YDTQKTAELF (176 aa)) form the Exonuclease domain. 4 residues coordinate Mg(2+): D23, E25, H182, and D187. H182 (proton donor/acceptor) is an active-site residue.

The protein belongs to the RNase T family. In terms of assembly, homodimer. The cofactor is Mg(2+).

In terms of biological role, trims short 3' overhangs of a variety of RNA species, leaving a one or two nucleotide 3' overhang. Responsible for the end-turnover of tRNA: specifically removes the terminal AMP residue from uncharged tRNA (tRNA-C-C-A). Also appears to be involved in tRNA biosynthesis. In Vibrio parahaemolyticus serotype O3:K6 (strain RIMD 2210633), this protein is Ribonuclease T.